Here is a 362-residue protein sequence, read N- to C-terminus: Phosphoserine aminotransferase (362 aa).

S9 and R42 together coordinate L-glutamate. Pyridoxal 5'-phosphate contacts are provided by residues G76 to R77, W102, T153, D174, and Q197. At K198 the chain carries N6-(pyridoxal phosphate)lysine. Position 239–240 (N239–T240) interacts with pyridoxal 5'-phosphate.

The protein belongs to the class-V pyridoxal-phosphate-dependent aminotransferase family. SerC subfamily. Homodimer. The cofactor is pyridoxal 5'-phosphate.

It localises to the cytoplasm. It carries out the reaction O-phospho-L-serine + 2-oxoglutarate = 3-phosphooxypyruvate + L-glutamate. The catalysed reaction is 4-(phosphooxy)-L-threonine + 2-oxoglutarate = (R)-3-hydroxy-2-oxo-4-phosphooxybutanoate + L-glutamate. The protein operates within amino-acid biosynthesis; L-serine biosynthesis; L-serine from 3-phospho-D-glycerate: step 2/3. Its pathway is cofactor biosynthesis; pyridoxine 5'-phosphate biosynthesis; pyridoxine 5'-phosphate from D-erythrose 4-phosphate: step 3/5. Its function is as follows. Catalyzes the reversible conversion of 3-phosphohydroxypyruvate to phosphoserine and of 3-hydroxy-2-oxo-4-phosphonooxybutanoate to phosphohydroxythreonine. The sequence is that of Phosphoserine aminotransferase from Escherichia coli O127:H6 (strain E2348/69 / EPEC).